A 192-amino-acid chain; its full sequence is Putative 3-methyladenine DNA glycosylase (192 aa).

The protein belongs to the DNA glycosylase MPG family.

In Bdellovibrio bacteriovorus (strain ATCC 15356 / DSM 50701 / NCIMB 9529 / HD100), this protein is Putative 3-methyladenine DNA glycosylase.